Consider the following 573-residue polypeptide: Isocitrate dehydrogenase kinase/phosphatase (573 aa).

Residues 317 to 323 (APGVRGM) and K338 contribute to the ATP site. The active site involves D373.

The protein belongs to the AceK family.

It localises to the cytoplasm. The enzyme catalyses L-seryl-[isocitrate dehydrogenase] + ATP = O-phospho-L-seryl-[isocitrate dehydrogenase] + ADP + H(+). Its function is as follows. Bifunctional enzyme which can phosphorylate or dephosphorylate isocitrate dehydrogenase (IDH) on a specific serine residue. This is a regulatory mechanism which enables bacteria to bypass the Krebs cycle via the glyoxylate shunt in response to the source of carbon. When bacteria are grown on glucose, IDH is fully active and unphosphorylated, but when grown on acetate or ethanol, the activity of IDH declines drastically concomitant with its phosphorylation. The chain is Isocitrate dehydrogenase kinase/phosphatase from Pseudomonas fluorescens (strain Pf0-1).